Reading from the N-terminus, the 103-residue chain is MAANPSGQGFQNKNRVAILAELQEKRKLLMQNQSSTNHPGASIALARSPLNKDFRDHAEQQHIAAQQKAALQHAHAHSSGYFITQDSAFGNLILPVLPRLEAE.

The protein belongs to the SOSS-C family. In terms of assembly, belongs to the multiprotein complex Integrator. Component of the SOSS complex, composed of SOSS-B (SOSS-B1/NABP2 or SOSS-B2/NABP1), SOSS-A/INTS3 and SOSS-C/INIP.

It is found in the nucleus. Functionally, component of the SOSS complex, a multiprotein complex that functions downstream of the MRN complex to promote DNA repair and G2/M checkpoint. The SOSS complex associates with single-stranded DNA at DNA lesions and influences diverse endpoints in the cellular DNA damage response including cell-cycle checkpoint activation, recombinational repair and maintenance of genomic stability. Required for efficient homologous recombination-dependent repair of double-strand breaks (DSBs). The polypeptide is SOSS complex subunit C (INIP) (Gallus gallus (Chicken)).